We begin with the raw amino-acid sequence, 471 residues long: MSPTDASPVVTRFAPSPTGYLHIGGARTALFNWLYARGRGGKFLLRIEDTDKARSTAEATEAIFAGLRWLGLDWDGDAVSQAEGAARHAQVARALQEAGKAYKCFTTQDEIAAFREAARAEGRSTLFRSPWRDADPASHPDAPYVIRIKAPQEGTTVIADQVQGDVRIRNDQLDDMILLRSDGSPVYMLAVVVDDHDMGVTHVIRGDDHLNNAARQMMIYDAMGWDMPVFAHIPLIHGPDGKKLSKRHGALGVEEYQAMGYPAQAMRNYLARLGWSHGDDEFFGDAQAQAWFDLDGIGKSPARLDLKKLDNLSGQHLGVMADEAIVAGAQGYLAATGAPPLTEAQETGLSRAMYCLKDRAKKFPDLLEKAHFILASRPIDPDPKAAKSLDTVSRGILAELTPQLQNASWTRDTLEGVVGGLAEAHGLGLGKLAAPLRAALAGRSATPSVFDMMLVLGRDETLARLSDATSA.

Residues 15–25 (PSPTGYLHIGG) carry the 'HIGH' region motif. The 'KMSKS' region motif lies at 243–247 (KLSKR). An ATP-binding site is contributed by Lys-246.

It belongs to the class-I aminoacyl-tRNA synthetase family. Glutamate--tRNA ligase type 1 subfamily. Monomer.

The protein resides in the cytoplasm. The catalysed reaction is tRNA(Glu) + L-glutamate + ATP = L-glutamyl-tRNA(Glu) + AMP + diphosphate. Its function is as follows. Catalyzes the attachment of glutamate to tRNA(Glu) in a two-step reaction: glutamate is first activated by ATP to form Glu-AMP and then transferred to the acceptor end of tRNA(Glu). The sequence is that of Glutamate--tRNA ligase 1 from Dinoroseobacter shibae (strain DSM 16493 / NCIMB 14021 / DFL 12).